The sequence spans 311 residues: Ornithine carbamoyltransferase (311 aa).

Carbamoyl phosphate-binding positions include 54–58, Asn81, Arg104, and 131–134; these read STRTR and HPCQ. L-ornithine-binding positions include Asn164, Asp225, and 229–230; that span reads DM. Carbamoyl phosphate is bound by residues 268–271, Thr279, and Arg297; that span reads HDMP.

Belongs to the aspartate/ornithine carbamoyltransferase superfamily. OTCase family.

The protein localises to the cytoplasm. The catalysed reaction is carbamoyl phosphate + L-ornithine = L-citrulline + phosphate + H(+). Its pathway is amino-acid biosynthesis; L-arginine biosynthesis; L-arginine from L-ornithine and carbamoyl phosphate: step 1/3. In terms of biological role, reversibly catalyzes the transfer of the carbamoyl group from carbamoyl phosphate (CP) to the N(epsilon) atom of ornithine (ORN) to produce L-citrulline. This chain is Ornithine carbamoyltransferase (argF), found in Leptospira interrogans serogroup Icterohaemorrhagiae serovar copenhageni (strain Fiocruz L1-130).